A 604-amino-acid chain; its full sequence is uncharacterized protein (604 aa).

Positions 1-19 (MIVRILLLFIALFTFGVQA) are cleaved as a signal peptide.

It to H.influenzae HbpA.

This is an uncharacterized protein from Escherichia coli (strain K12).